A 424-amino-acid chain; its full sequence is MLPELQRSITWIQGTALTIGAVLGCGILILPSVTADTAGPASLFVWVFMSFLSFFLVGTLARLVKIAPSAGGITAYVQLAFQKKAGAILGWIMLGSVPIGVPIIALTGAHYVSYITEAADWQITLIAGCMLAISILLHMRGIQLSANISTLVICVIVFLLVTSIAVSLPHVTIAEFKPFLPHGWSAAGSVSVMIFFSFVGWEMITPLAEEFHRPEKDVPLSLFLAASCVAGLYIMLSFVTVGTHSYGENGEIASLAMLISKGAGESGVYVTVCLALFITFATIHANIAGFSRMVYALAREGHIPVFFGKLSATKRTPIRVLTAMAAVFGLVLAAHGLFQIDLTTLLKGPSAAFIASYICTMAAALKLLGRRDIGWWMALGAFVACAVIYSFSGWALLYPAVLAAAGYFYMKTKGGHKKKLDHVL.

Transmembrane regions (helical) follow at residues 9–29 (ITWI…GILI), 41–61 (ASLF…GTLA), 86–106 (GAIL…IIAL), 119–139 (ADWQ…LLHM), 148–168 (ISTL…AVSL), 184–204 (WSAA…WEMI), 222–242 (LFLA…VTVG), 270–290 (VTVC…IAGF), 320–340 (VLTA…LFQI), 345–365 (LLKG…AAAL), and 377–397 (MALG…WALL).

It belongs to the amino acid-polyamine-organocation (APC) superfamily.

It localises to the cell membrane. This is an uncharacterized protein from Bacillus subtilis (strain 168).